Consider the following 552-residue polypeptide: Iduronate 2-sulfatase (552 aa).

The N-terminal stretch at 1–29 (MSPPPPPPIWRQLSFSLLLGSFCIALESA) is a signal peptide. Positions 30–35 (AQGNSA) are excised as a propeptide. Residues D47, D48, and C86 each contribute to the Ca(2+) site. The active-site Nucleophile is C86. C86 is subject to 3-oxoalanine (Cys). A glycan (N-linked (GlcNAc...) asparagine) is linked at N117. H140 is an active-site residue. A glycan (N-linked (GlcNAc...) asparagine) is linked at N146. A disulfide bridge links C173 with C186. N248 and N282 each carry an N-linked (GlcNAc...) asparagine glycan. Residues D336 and H337 each contribute to the Ca(2+) site. C424 and C434 form a disulfide bridge. 2 N-linked (GlcNAc...) asparagine glycosylation sites follow: N515 and N539.

It belongs to the sulfatase family. Monomer. The 58-kDa mature form is composed of two chains resulting from proteolitic processing, the 42-kDa chain and the 14-kDa chain that remain stably associated and form the 58-kDa intermediate form which is enzymatically active. The cofactor is Ca(2+). Post-translationally, synthesized as a 75-kDa precursor form in the endoplasmic reticulum (ER), and then processed by proteolytic cleavage through various intermediates to yield a 55-kDa mature form, with the release of an 18 kDa polypeptide. In terms of processing, the conversion to 3-oxoalanine (also known as C-formylglycine, FGly), of a serine or cysteine residue in prokaryotes and of a cysteine residue in eukaryotes, is critical for catalytic activity. Found to be expressed in alpha and beta pancreatic cells.

Its subcellular location is the lysosome. The enzyme catalyses Hydrolysis of the 2-sulfate groups of the L-iduronate 2-sulfate units of dermatan sulfate, heparan sulfate and heparin.. Its function is as follows. Lysosomal enzyme involved in the degradation pathway of dermatan sulfate and heparan sulfate. The polypeptide is Iduronate 2-sulfatase (Ids) (Mus musculus (Mouse)).